Here is a 111-residue protein sequence, read N- to C-terminus: UPF0060 membrane protein XCC2880 (111 aa).

Transmembrane regions (helical) follow at residues 8–28 (LLLF…PYLW), 34–54 (SVWL…LLTL), 62–82 (VYAA…WWVD), and 91–111 (LLGA…PRSG).

The protein belongs to the UPF0060 family.

It is found in the cell inner membrane. The polypeptide is UPF0060 membrane protein XCC2880 (Xanthomonas campestris pv. campestris (strain ATCC 33913 / DSM 3586 / NCPPB 528 / LMG 568 / P 25)).